Reading from the N-terminus, the 340-residue chain is Glutamyl-tRNA reductase (340 aa).

Substrate is bound by residues 49–52 (TCNR), serine 108, 113–115 (ETE), and glutamine 119. Catalysis depends on cysteine 50, which acts as the Nucleophile. Position 188–193 (188–193 (GAGEMS)) interacts with NADP(+).

The protein belongs to the glutamyl-tRNA reductase family. Homodimer.

It carries out the reaction (S)-4-amino-5-oxopentanoate + tRNA(Glu) + NADP(+) = L-glutamyl-tRNA(Glu) + NADPH + H(+). Its pathway is porphyrin-containing compound metabolism; protoporphyrin-IX biosynthesis; 5-aminolevulinate from L-glutamyl-tRNA(Glu): step 1/2. Functionally, catalyzes the NADPH-dependent reduction of glutamyl-tRNA(Glu) to glutamate 1-semialdehyde (GSA). This is Glutamyl-tRNA reductase from Akkermansia muciniphila (strain ATCC BAA-835 / DSM 22959 / JCM 33894 / BCRC 81048 / CCUG 64013 / CIP 107961 / Muc).